Here is a 298-residue protein sequence, read N- to C-terminus: 4-hydroxy-tetrahydrodipicolinate synthase (298 aa).

T51 contributes to the pyruvate binding site. Y139 (proton donor/acceptor) is an active-site residue. K167 serves as the catalytic Schiff-base intermediate with substrate. Pyruvate is bound at residue I209.

The protein belongs to the DapA family. In terms of assembly, homotetramer; dimer of dimers.

The protein resides in the cytoplasm. It catalyses the reaction L-aspartate 4-semialdehyde + pyruvate = (2S,4S)-4-hydroxy-2,3,4,5-tetrahydrodipicolinate + H2O + H(+). It functions in the pathway amino-acid biosynthesis; L-lysine biosynthesis via DAP pathway; (S)-tetrahydrodipicolinate from L-aspartate: step 3/4. Catalyzes the condensation of (S)-aspartate-beta-semialdehyde [(S)-ASA] and pyruvate to 4-hydroxy-tetrahydrodipicolinate (HTPA). This is 4-hydroxy-tetrahydrodipicolinate synthase from Histophilus somni (strain 2336) (Haemophilus somnus).